We begin with the raw amino-acid sequence, 225 residues long: NAD(P)H-quinone oxidoreductase subunit K, chloroplastic (225 aa).

Residues Cys-43, Cys-44, Cys-108, and Cys-139 each contribute to the [4Fe-4S] cluster site.

Belongs to the complex I 20 kDa subunit family. In terms of assembly, NDH is composed of at least 16 different subunits, 5 of which are encoded in the nucleus. [4Fe-4S] cluster serves as cofactor.

It localises to the plastid. The protein resides in the chloroplast thylakoid membrane. The catalysed reaction is a plastoquinone + NADH + (n+1) H(+)(in) = a plastoquinol + NAD(+) + n H(+)(out). It catalyses the reaction a plastoquinone + NADPH + (n+1) H(+)(in) = a plastoquinol + NADP(+) + n H(+)(out). Functionally, NDH shuttles electrons from NAD(P)H:plastoquinone, via FMN and iron-sulfur (Fe-S) centers, to quinones in the photosynthetic chain and possibly in a chloroplast respiratory chain. The immediate electron acceptor for the enzyme in this species is believed to be plastoquinone. Couples the redox reaction to proton translocation, and thus conserves the redox energy in a proton gradient. This chain is NAD(P)H-quinone oxidoreductase subunit K, chloroplastic, found in Oenothera argillicola (Appalachian evening primrose).